A 322-amino-acid chain; its full sequence is Phosphatidylglycerol--prolipoprotein diacylglyceryl transferase (322 aa).

3 consecutive transmembrane segments (helical) span residues 23-43 (VYPI…AFFW), 53-73 (FFAL…LWFV), and 97-117 (GLSI…YIYF). Residue arginine 143 participates in a 1,2-diacyl-sn-glycero-3-phospho-(1'-sn-glycerol) binding. Transmembrane regions (helical) follow at residues 191 to 211 (PLFL…VWII) and 250 to 270 (LAAM…EIWA).

Belongs to the Lgt family.

It is found in the cell membrane. The catalysed reaction is L-cysteinyl-[prolipoprotein] + a 1,2-diacyl-sn-glycero-3-phospho-(1'-sn-glycerol) = an S-1,2-diacyl-sn-glyceryl-L-cysteinyl-[prolipoprotein] + sn-glycerol 1-phosphate + H(+). Its pathway is protein modification; lipoprotein biosynthesis (diacylglyceryl transfer). Functionally, catalyzes the transfer of the diacylglyceryl group from phosphatidylglycerol to the sulfhydryl group of the N-terminal cysteine of a prolipoprotein, the first step in the formation of mature lipoproteins. The protein is Phosphatidylglycerol--prolipoprotein diacylglyceryl transferase of Mycoplasmopsis pulmonis (strain UAB CTIP) (Mycoplasma pulmonis).